A 175-amino-acid chain; its full sequence is Ribosome maturation factor RimM (175 aa).

A PRC barrel domain is found at 96 to 175 (EGDYYWHDLI…TIEVDWDAGF (80 aa)).

This sequence belongs to the RimM family. In terms of assembly, binds ribosomal protein uS19.

The protein resides in the cytoplasm. Its function is as follows. An accessory protein needed during the final step in the assembly of 30S ribosomal subunit, possibly for assembly of the head region. Essential for efficient processing of 16S rRNA. May be needed both before and after RbfA during the maturation of 16S rRNA. It has affinity for free ribosomal 30S subunits but not for 70S ribosomes. The protein is Ribosome maturation factor RimM of Actinobacillus succinogenes (strain ATCC 55618 / DSM 22257 / CCUG 43843 / 130Z).